The following is a 466-amino-acid chain: RUS family member 1 (466 aa).

N-acetylalanine is present on Ala-2. The helical transmembrane segment at 245–265 (LLMLPLVSDCPSLSLGCFVLL) threads the bilayer.

This sequence belongs to the RUS1 family.

The protein localises to the membrane. This chain is RUS family member 1, found in Mus musculus (Mouse).